The sequence spans 71 residues: MKEFLTAATSSTGGASLVGAATGQLYIAGATFICFLLFGAWGAYWKYRDSKAIQEALNDGDLNKALKIRGR.

The Cytoplasmic segment spans residues 1-24 (MKEFLTAATSSTGGASLVGAATGQ). A helical; Signal-anchor for type II membrane protein membrane pass occupies residues 25–45 (LYIAGATFICFLLFGAWGAYW). Residues 46–71 (KYRDSKAIQEALNDGDLNKALKIRGR) lie on the Periplasmic side of the membrane.

In terms of assembly, homomultimer.

The protein resides in the host cell inner membrane. Accumulates harmlessly in the cytoplasmic membrane until it reaches a critical concentration that triggers the formation of nanometer-scale pores (pinholes) causing host cell membrane depolarization and endolysin refolding and release into the periplasmic space. Once the pinholin has permeabilized the host cell membrane, the SAR-endolysin is released into the periplasm and breaks down the peptidoglycan layer. Determines the precise timing of host cell lysis. Participates with the SAR-endolysin and the U-spanin protein in the sequential events which lead to the programmed host cell lysis releasing the mature viral particles from the host cell. The polypeptide is Holin (Escherichia coli (Bacteriophage T1)).